Here is a 101-residue protein sequence, read N- to C-terminus: Small ribosomal subunit protein uS14 (101 aa).

It belongs to the universal ribosomal protein uS14 family. In terms of assembly, part of the 30S ribosomal subunit. Contacts proteins S3 and S10.

In terms of biological role, binds 16S rRNA, required for the assembly of 30S particles and may also be responsible for determining the conformation of the 16S rRNA at the A site. The polypeptide is Small ribosomal subunit protein uS14 (Methylibium petroleiphilum (strain ATCC BAA-1232 / LMG 22953 / PM1)).